The chain runs to 195 residues: 2-amino-4-hydroxy-6-hydroxymethyldihydropteridine pyrophosphokinase (195 aa).

This sequence belongs to the HPPK family.

The enzyme catalyses 6-hydroxymethyl-7,8-dihydropterin + ATP = (7,8-dihydropterin-6-yl)methyl diphosphate + AMP + H(+). It participates in cofactor biosynthesis; tetrahydrofolate biosynthesis; 2-amino-4-hydroxy-6-hydroxymethyl-7,8-dihydropteridine diphosphate from 7,8-dihydroneopterin triphosphate: step 4/4. In terms of biological role, catalyzes the transfer of pyrophosphate from adenosine triphosphate (ATP) to 6-hydroxymethyl-7,8-dihydropterin, an enzymatic step in folate biosynthesis pathway. This chain is 2-amino-4-hydroxy-6-hydroxymethyldihydropteridine pyrophosphokinase (folK), found in Synechocystis sp. (strain ATCC 27184 / PCC 6803 / Kazusa).